A 263-amino-acid chain; its full sequence is Purine nucleoside phosphorylase SE_0862 (263 aa).

The Zn(2+) site is built by histidine 79, cysteine 124, and histidine 141.

It belongs to the purine nucleoside phosphorylase YfiH/LACC1 family. As to quaternary structure, homodimer. It depends on Cu(2+) as a cofactor. Zn(2+) is required as a cofactor.

The catalysed reaction is adenosine + phosphate = alpha-D-ribose 1-phosphate + adenine. It catalyses the reaction S-methyl-5'-thioadenosine + phosphate = 5-(methylsulfanyl)-alpha-D-ribose 1-phosphate + adenine. The enzyme catalyses inosine + phosphate = alpha-D-ribose 1-phosphate + hypoxanthine. It carries out the reaction adenosine + H2O + H(+) = inosine + NH4(+). Its function is as follows. Purine nucleoside enzyme that catalyzes the phosphorolysis of adenosine and inosine nucleosides, yielding D-ribose 1-phosphate and the respective free bases, adenine and hypoxanthine. Also catalyzes the phosphorolysis of S-methyl-5'-thioadenosine into adenine and S-methyl-5-thio-alpha-D-ribose 1-phosphate. Also has adenosine deaminase activity. This Staphylococcus epidermidis (strain ATCC 12228 / FDA PCI 1200) protein is Purine nucleoside phosphorylase SE_0862.